The chain runs to 352 residues: Anthranilate phosphoribosyltransferase (352 aa).

Residues glycine 82, 85–86 (GD), serine 90, 92–95 (NIST), 110–118 (KHGNRAVTG), and glycine 122 contribute to the 5-phospho-alpha-D-ribose 1-diphosphate site. Residue glycine 82 participates in anthranilate binding. A Mg(2+)-binding site is contributed by serine 94. Residue asparagine 113 coordinates anthranilate. Residue arginine 168 coordinates anthranilate. Aspartate 232 and glutamate 233 together coordinate Mg(2+).

The protein belongs to the anthranilate phosphoribosyltransferase family. As to quaternary structure, homodimer. It depends on Mg(2+) as a cofactor.

The enzyme catalyses N-(5-phospho-beta-D-ribosyl)anthranilate + diphosphate = 5-phospho-alpha-D-ribose 1-diphosphate + anthranilate. The protein operates within amino-acid biosynthesis; L-tryptophan biosynthesis; L-tryptophan from chorismate: step 2/5. Functionally, catalyzes the transfer of the phosphoribosyl group of 5-phosphorylribose-1-pyrophosphate (PRPP) to anthranilate to yield N-(5'-phosphoribosyl)-anthranilate (PRA). In Methanothermobacter thermautotrophicus (strain ATCC 29096 / DSM 1053 / JCM 10044 / NBRC 100330 / Delta H) (Methanobacterium thermoautotrophicum), this protein is Anthranilate phosphoribosyltransferase.